The chain runs to 418 residues: Putative ion-transport protein YfeO (418 aa).

12 helical membrane passes run 10–30 (LLLSLPAVAIGIASSLILIVV), 54–74 (DSPIWIIGVLTLTGIAVGLVI), 99–119 (ALPGLIVALILGLAGGVSLGP), 120–140 (EHPIMTVNIALAVAIGARLLP), 149–169 (ILASAGTIGALFGTPVAAALI), 186–206 (LFAPLMAAAAGALTTGLFFHP), 223–243 (ILSGAIVAAIAIAAGMVAVWC), 258–278 (VLVLGIGGFILGILGVIGGPV), 300–320 (DYFLLAVIKLAALVVAAASGF), 322–342 (GGRIFPAVFVGVALGLMLHEH), 343–363 (VPAVPAAITVSCAILGIVLVV), and 371–391 (LFMAAVVVPNTTLLPLLCIVM).

It belongs to the chloride channel (TC 2.A.49) family.

It localises to the cell membrane. The sequence is that of Putative ion-transport protein YfeO from Shigella sonnei (strain Ss046).